We begin with the raw amino-acid sequence, 290 residues long: Carbonic anhydrase-related protein (290 aa).

Residues 1–26 (MADLSFIEDTVAFPEKEEDEEEEEEG) form a disordered region. Residue Ser5 is modified to Phosphoserine. The span at 16-26 (KEEDEEEEEEG) shows a compositional bias: acidic residues. Residues 27-289 (VEWGYEEGVE…LSDRVIRAAF (263 aa)) form the Alpha-carbonic anhydrase domain. Residue His87 is the Proton donor/acceptor of the active site. Zn(2+) contacts are provided by His118 and His141.

This sequence belongs to the alpha-carbonic anhydrase family.

In terms of biological role, does not have a carbonic anhydrase catalytic activity. The sequence is that of Carbonic anhydrase-related protein (CA8) from Homo sapiens (Human).